The primary structure comprises 466 residues: MSNNTDLSPVHVIGGGLAGSEAAWQIAQAGVPVVLHEMRPVRGTDAHKTEQLAELVCSNSFRSDDAETNAVGVLHAEMRLAGSLIMACADAHQVPAGGALAVDREGFSQAVTARLEAHPLITIEREEITGLPPTEWGTTIIATGPLTAPSLAEAIAAETDADALAFFDAIAPIIHFDSINMDVCWFQSRYDKVGPGGTGKDYINCPMDKEQYEAFVAALIEGDKTDFKEWEGTPYFDGCLPIEVMAERGPETLRHGPMKPMGLTNAHNPTVKPYAVVQLRQENALGTLYNMVGFQTKLKYGSQTGIFKMIPGLENAEFARLGGLHRNTYLNSPVLLDNVLRLKSRQTLRFAGQVTGCEGYVESSAIGLLAGRFTAAEKLSQAAVPPPPTTAFGALLGHITGGHIVTDDEPGKRSFQPMNVNFGLFPPVDVPKPEGKRLRGKEKTIAKKRALSARALADCRNWLSLY.

14–19 (GGGLAG) contributes to the FAD binding site.

It belongs to the MnmG family. TrmFO subfamily. It depends on FAD as a cofactor.

The protein resides in the cytoplasm. The enzyme catalyses uridine(54) in tRNA + (6R)-5,10-methylene-5,6,7,8-tetrahydrofolate + NADH + H(+) = 5-methyluridine(54) in tRNA + (6S)-5,6,7,8-tetrahydrofolate + NAD(+). It carries out the reaction uridine(54) in tRNA + (6R)-5,10-methylene-5,6,7,8-tetrahydrofolate + NADPH + H(+) = 5-methyluridine(54) in tRNA + (6S)-5,6,7,8-tetrahydrofolate + NADP(+). Its function is as follows. Catalyzes the folate-dependent formation of 5-methyl-uridine at position 54 (M-5-U54) in all tRNAs. The polypeptide is Methylenetetrahydrofolate--tRNA-(uracil-5-)-methyltransferase TrmFO (Brucella suis (strain ATCC 23445 / NCTC 10510)).